Here is a 555-residue protein sequence, read N- to C-terminus: Putative protein NRT1/ PTR FAMILY 2.14 (555 aa).

The next 12 membrane-spanning stretches (helical) occupy residues 62–82 (VTLI…GAFI), 93–113 (IVFG…TSLV), 135–155 (YSQL…TGGI), 181–201 (FFSW…TLVL), 209–229 (WGIG…LLFV), 234–254 (YVFV…LVAA), 319–339 (IKSI…FLAM), 363–383 (LIPP…WLPF), 405–425 (LQKV…SGIV), 441–461 (VFWL…TIVG), 480–500 (SLLY…VSIV), and 523–543 (CFYY…FWCA).

The protein belongs to the major facilitator superfamily. Proton-dependent oligopeptide transporter (POT/PTR) (TC 2.A.17) family. Not detected.

It is found in the membrane. This is Putative protein NRT1/ PTR FAMILY 2.14 (NPF2.14) from Arabidopsis thaliana (Mouse-ear cress).